A 688-amino-acid polypeptide reads, in one-letter code: UvrABC system protein B (688 aa).

A Helicase ATP-binding domain is found at 41 to 429 (ANFEAGLAKQ…AGEVTELVVR (389 aa)). Residue 54-61 (GVTGSGKT) participates in ATP binding. The short motif at 107-130 (YYDYYQPEAYVPSSDTFIEKDSSI) is the Beta-hairpin element. In terms of domain architecture, Helicase C-terminal spans 446–612 (QVDDLMSEIH…SVERPISDIM (167 aa)). The segment at 616-646 (REDAAEKKSGKGRSKSRQVAEETPDYRAMKP) is disordered. The segment covering 633-645 (QVAEETPDYRAMK) has biased composition (basic and acidic residues). The 36-residue stretch at 650–685 (AGKLKSLEQKMYQHAKDLEFEAAAQIRDQIQKLKTA) folds into the UVR domain.

It belongs to the UvrB family. Forms a heterotetramer with UvrA during the search for lesions. Interacts with UvrC in an incision complex.

It localises to the cytoplasm. The UvrABC repair system catalyzes the recognition and processing of DNA lesions. A damage recognition complex composed of 2 UvrA and 2 UvrB subunits scans DNA for abnormalities. Upon binding of the UvrA(2)B(2) complex to a putative damaged site, the DNA wraps around one UvrB monomer. DNA wrap is dependent on ATP binding by UvrB and probably causes local melting of the DNA helix, facilitating insertion of UvrB beta-hairpin between the DNA strands. Then UvrB probes one DNA strand for the presence of a lesion. If a lesion is found the UvrA subunits dissociate and the UvrB-DNA preincision complex is formed. This complex is subsequently bound by UvrC and the second UvrB is released. If no lesion is found, the DNA wraps around the other UvrB subunit that will check the other stand for damage. The chain is UvrABC system protein B from Xanthomonas oryzae pv. oryzae (strain KACC10331 / KXO85).